Consider the following 215-residue polypeptide: Probable GTP-binding protein EngB (215 aa).

An EngB-type G domain is found at 26-200 (EGIEVAFAGR…RAKLDEWFAP (175 aa)). Residues 34 to 41 (GRSNAGKS), 61 to 65 (GRTQL), 79 to 82 (DLPG), 146 to 149 (TKAD), and 179 to 181 (FSS) contribute to the GTP site. Residues S41 and T63 each coordinate Mg(2+).

This sequence belongs to the TRAFAC class TrmE-Era-EngA-EngB-Septin-like GTPase superfamily. EngB GTPase family. Mg(2+) is required as a cofactor.

In terms of biological role, necessary for normal cell division and for the maintenance of normal septation. This chain is Probable GTP-binding protein EngB, found in Aliivibrio fischeri (strain ATCC 700601 / ES114) (Vibrio fischeri).